The primary structure comprises 43 residues: Protein PsbN (43 aa).

A helical membrane pass occupies residues 4–24 (GILIVIFISCLLVSFTGYAVY).

The protein belongs to the PsbN family.

The protein localises to the plastid. It localises to the chloroplast thylakoid membrane. In terms of biological role, may play a role in photosystem I and II biogenesis. This Coleochaete orbicularis (Charophycean green alga) protein is Protein PsbN.